The sequence spans 160 residues: Nascent polypeptide-associated complex subunit beta (160 aa).

2 disordered regions span residues 16-36 (GGKGTPRRKVKKVHKSSGTDD) and 118-160 (ESYQ…TEVE). Over residues 20–30 (TPRRKVKKVHK) the composition is skewed to basic residues. An NAC-A/B domain is found at 33–98 (GTDDKKLQTA…GEDKELTELV (66 aa)). A compositionally biased stretch (basic and acidic residues) spans 124 to 134 (QKEKGEDGDKK). The span at 135-145 (DDDDEDDDDIP) shows a compositional bias: acidic residues.

Belongs to the NAC-beta family. As to quaternary structure, part of the nascent polypeptide-associated complex (NAC), consisting of EGD2 and EGD1. NAC associates with ribosomes via EGD1.

The protein localises to the cytoplasm. It localises to the nucleus. In terms of biological role, component of the nascent polypeptide-associated complex (NAC), a dynamic component of the ribosomal exit tunnel, protecting the emerging polypeptides from interaction with other cytoplasmic proteins to ensure appropriate nascent protein targeting. The NAC complex also promotes mitochondrial protein import by enhancing productive ribosome interactions with the outer mitochondrial membrane and blocks the inappropriate interaction of ribosomes translating non-secretory nascent polypeptides with translocation sites in the membrane of the endoplasmic reticulum. EGD1 may act as a transcription factor that exert a negative effect on the expression of several genes that are transcribed by RNA polymerase II. The sequence is that of Nascent polypeptide-associated complex subunit beta (EGD1) from Phaeosphaeria nodorum (strain SN15 / ATCC MYA-4574 / FGSC 10173) (Glume blotch fungus).